Consider the following 255-residue polypeptide: NAD kinase (255 aa).

Asp-44 acts as the Proton acceptor in catalysis. Residues 44-45 (DG), His-49, 114-115 (NE), Asp-144, Ala-152, 155-160 (SAYNLS), and Gln-216 contribute to the NAD(+) site.

It belongs to the NAD kinase family. A divalent metal cation is required as a cofactor.

It is found in the cytoplasm. The catalysed reaction is NAD(+) + ATP = ADP + NADP(+) + H(+). Its function is as follows. Involved in the regulation of the intracellular balance of NAD and NADP, and is a key enzyme in the biosynthesis of NADP. Catalyzes specifically the phosphorylation on 2'-hydroxyl of the adenosine moiety of NAD to yield NADP. The chain is NAD kinase from Rickettsia africae (strain ESF-5).